The following is a 245-amino-acid chain: Ribonuclease PH (245 aa).

Phosphate contacts are provided by residues Arg86 and Gly124 to Arg126.

The protein belongs to the RNase PH family. Homohexameric ring arranged as a trimer of dimers. It has been suggested that the active form is the dimer which binds tRNA and that the hexameric form protects the substrate recognition loop (approximately residues 65-82) from proteolysis.

The enzyme catalyses tRNA(n+1) + phosphate = tRNA(n) + a ribonucleoside 5'-diphosphate. Phosphorolytic 3'-5' exoribonuclease that plays an important role in tRNA 3'-end maturation. Removes nucleotide residues following the 3'-CCA terminus of tRNAs; can also add nucleotides to the ends of RNA molecules by using nucleoside diphosphates as substrates, but this may not be physiologically important. Probably plays a role in initiation of 16S rRNA degradation (leading to ribosome degradation) during starvation. Plays a role in the secondary pathway of 23S rRNA 3' end maturation. The chain is Ribonuclease PH from Bacillus subtilis (strain 168).